A 76-amino-acid polypeptide reads, in one-letter code: Large ribosomal subunit protein eL20 (76 aa).

Belongs to the eukaryotic ribosomal protein eL20 family. As to quaternary structure, part of the 50S ribosomal subunit. Binds 23S rRNA.

The polypeptide is Large ribosomal subunit protein eL20 (Methanococcus vannielii (strain ATCC 35089 / DSM 1224 / JCM 13029 / OCM 148 / SB)).